Here is a 187-residue protein sequence, read N- to C-terminus: Large ribosomal subunit protein uL5 (187 aa).

Belongs to the universal ribosomal protein uL5 family. Part of the 50S ribosomal subunit; part of the 5S rRNA/L5/L18/L25 subcomplex. Contacts the 5S rRNA and the P site tRNA. Forms a bridge to the 30S subunit in the 70S ribosome.

In terms of biological role, this is one of the proteins that bind and probably mediate the attachment of the 5S RNA into the large ribosomal subunit, where it forms part of the central protuberance. In the 70S ribosome it contacts protein S13 of the 30S subunit (bridge B1b), connecting the 2 subunits; this bridge is implicated in subunit movement. Contacts the P site tRNA; the 5S rRNA and some of its associated proteins might help stabilize positioning of ribosome-bound tRNAs. This chain is Large ribosomal subunit protein uL5, found in Mycobacterium leprae (strain Br4923).